We begin with the raw amino-acid sequence, 302 residues long: 33 kDa chaperonin (302 aa).

Cystine bridges form between cysteine 247–cysteine 249 and cysteine 280–cysteine 283.

This sequence belongs to the HSP33 family. In terms of processing, under oxidizing conditions two disulfide bonds are formed involving the reactive cysteines. Under reducing conditions zinc is bound to the reactive cysteines and the protein is inactive.

It is found in the cytoplasm. Redox regulated molecular chaperone. Protects both thermally unfolding and oxidatively damaged proteins from irreversible aggregation. Plays an important role in the bacterial defense system toward oxidative stress. The chain is 33 kDa chaperonin from Prochlorococcus marinus (strain AS9601).